The primary structure comprises 583 residues: MNIFRFFEGRVEAALRSLEEEGVLPSGLDLTRVAVEPPRDPSHGDLSTNAAMVLAKPAGMKPRELAEQLAVKLGGEEAVTEVDVAGPGFINLRLNPAFWQARIPEILRSGPAYGASDVGAGEAVNVEYVSANPTGPMHVGHVRGAVFGDALCNLLEKVGYRVCREYYINDAGGQIEVLARSAFLRYREALGEDIGQIPEGLYPGGYLKPVGQALVAAHGRSLLEKDEPEALSIVREAAVEAMMELIRGDLGVLGIVHETFFSELALHRSGFVEQTLKVLEDKGLIYIGELEPPKGEVPDDWEARPQTLFRSTEFGDDTDRALKKSDGSWTYFAPDIAYHLDKYNRGYRTLIDVWGADHSGYIKRMRAAIAGVTDGNAEFDVKICQLVRLFRNGEPVKMSKRSGDFVTLREVVDEVGKDVVRFMMLTRKNDAPLDFDFAKVMEQSRDNPVFYVQYANARIHSVLRNVAEEGTYDLSDGALANADFTLLTDEAEMALVRLMAGFPRLVEQAALAHEPHRIAFYLDDLAAAFHGLWNKGKDDHSLRFIRADHRDVTLARLALIRSAAYVIAAGLAILGVEPTEEMR.

The 'HIGH' region motif lies at 131–141; that stretch reads ANPTGPMHVGH.

Belongs to the class-I aminoacyl-tRNA synthetase family. As to quaternary structure, monomer.

Its subcellular location is the cytoplasm. It carries out the reaction tRNA(Arg) + L-arginine + ATP = L-arginyl-tRNA(Arg) + AMP + diphosphate. The protein is Arginine--tRNA ligase of Parvibaculum lavamentivorans (strain DS-1 / DSM 13023 / NCIMB 13966).